The sequence spans 432 residues: Asparagine--tRNA ligase 2 (432 aa).

This sequence belongs to the class-II aminoacyl-tRNA synthetase family. As to quaternary structure, homodimer.

It is found in the cytoplasm. The enzyme catalyses tRNA(Asn) + L-asparagine + ATP = L-asparaginyl-tRNA(Asn) + AMP + diphosphate + H(+). The sequence is that of Asparagine--tRNA ligase 2 (asnS2) from Lactiplantibacillus plantarum (strain ATCC BAA-793 / NCIMB 8826 / WCFS1) (Lactobacillus plantarum).